Here is a 119-residue protein sequence, read N- to C-terminus: Protein TusC (119 aa).

Belongs to the DsrF/TusC family. As to quaternary structure, heterohexamer, formed by a dimer of trimers. The hexameric TusBCD complex contains 2 copies each of TusB, TusC and TusD. The TusBCD complex interacts with TusE.

The protein resides in the cytoplasm. Part of a sulfur-relay system required for 2-thiolation of 5-methylaminomethyl-2-thiouridine (mnm(5)s(2)U) at tRNA wobble positions. The polypeptide is Protein TusC (Shigella boydii serotype 18 (strain CDC 3083-94 / BS512)).